Reading from the N-terminus, the 226-residue chain is 7-cyano-7-deazaguanine synthase (226 aa).

8–18 is a binding site for ATP; that stretch reads LSGGLDSTTTL. Zn(2+) contacts are provided by Cys-188, Cys-198, Cys-201, and Cys-204.

It belongs to the QueC family. The cofactor is Zn(2+).

It catalyses the reaction 7-carboxy-7-deazaguanine + NH4(+) + ATP = 7-cyano-7-deazaguanine + ADP + phosphate + H2O + H(+). The protein operates within purine metabolism; 7-cyano-7-deazaguanine biosynthesis. In terms of biological role, catalyzes the ATP-dependent conversion of 7-carboxy-7-deazaguanine (CDG) to 7-cyano-7-deazaguanine (preQ(0)). This is 7-cyano-7-deazaguanine synthase from Nitrosomonas eutropha (strain DSM 101675 / C91 / Nm57).